The following is a 1444-amino-acid chain: Protein shortage in chiasmata 1 ortholog (1444 aa).

Over residues 1106-1117 (SITKSPQISSPQ) the composition is skewed to low complexity. Residues 1106–1129 (SITKSPQISSPQENRNQISTLSSQ) are disordered.

The protein belongs to the XPF family. Highly divergent. As to quaternary structure, interacts with TEX11. Interacts with SPO16.

The protein resides in the chromosome. Its function is as follows. ATPase required during meiosis for the formation of crossover recombination intermediates. Binds DNA: preferentially binds to single-stranded DNA and DNA branched structures. Does not show nuclease activity in vitro, but shows ATPase activity, which is stimulated by the presence of single-stranded DNA. Plays a key role in homologous recombination and crossing-over in meiotic prophase I in male and female germ cells. Required for proper synaptonemal complex assembly and homologous chromosome pairing. Requiref for recruitment TEX11 and MSH4 to recombination intermediates. In Homo sapiens (Human), this protein is Protein shortage in chiasmata 1 ortholog.